The sequence spans 1262 residues: Isoleucine--tRNA ligase, cytoplasmic (1262 aa).

Methionine 1 carries the post-translational modification N-acetylmethionine. A 'HIGH' region motif is present at residues 48-58; the sequence is PFATGLPHYGH. Positions 600 to 604 match the 'KMSKS' region motif; sequence KMSKR. Lysine 603 lines the ATP pocket. At serine 1049 the chain carries Phosphoserine. The residue at position 1058 (threonine 1058) is a Phosphothreonine.

Belongs to the class-I aminoacyl-tRNA synthetase family. Part of a multisubunit complex that groups tRNA ligases for Arg (RARS1), Asp (DARS1), Gln (QARS1), Ile (IARS1), Leu (LARS1), Lys (KARS1), Met (MARS1) the bifunctional ligase for Glu and Pro (EPRS1) and the auxiliary subunits AIMP1/p43, AIMP2/p38 and EEF1E1/p18.

Its subcellular location is the cytoplasm. The protein localises to the cytosol. The catalysed reaction is tRNA(Ile) + L-isoleucine + ATP = L-isoleucyl-tRNA(Ile) + AMP + diphosphate. In terms of biological role, catalyzes the specific attachment of an amino acid to its cognate tRNA in a 2 step reaction: the amino acid (AA) is first activated by ATP to form AA-AMP and then transferred to the acceptor end of the tRNA. The chain is Isoleucine--tRNA ligase, cytoplasmic (Iars1) from Mus musculus (Mouse).